The following is a 208-amino-acid chain: 3-demethoxyubiquinol 3-hydroxylase (208 aa).

6 residues coordinate Fe cation: glutamate 57, glutamate 87, histidine 90, glutamate 139, glutamate 171, and histidine 174.

It belongs to the COQ7 family. Fe cation is required as a cofactor.

It is found in the cell membrane. The catalysed reaction is a 5-methoxy-2-methyl-3-(all-trans-polyprenyl)benzene-1,4-diol + AH2 + O2 = a 3-demethylubiquinol + A + H2O. It functions in the pathway cofactor biosynthesis; ubiquinone biosynthesis. Functionally, catalyzes the hydroxylation of 2-nonaprenyl-3-methyl-6-methoxy-1,4-benzoquinol during ubiquinone biosynthesis. This chain is 3-demethoxyubiquinol 3-hydroxylase, found in Burkholderia cenocepacia (strain ATCC BAA-245 / DSM 16553 / LMG 16656 / NCTC 13227 / J2315 / CF5610) (Burkholderia cepacia (strain J2315)).